The sequence spans 637 residues: Chaperone protein HtpG (637 aa).

Positions 1–347 (MTQSVHAETH…SNDLPLNVSR (347 aa)) are a; substrate-binding. Positions 348 to 564 (EILQDNKVTV…NHGMSTQMIK (217 aa)) are b. A c region spans residues 565–637 (LMRAAGQPVP…SRINRLLLQA (73 aa)).

It belongs to the heat shock protein 90 family. Homodimer.

It is found in the cytoplasm. Molecular chaperone. Has ATPase activity. The polypeptide is Chaperone protein HtpG (Aeromonas salmonicida (strain A449)).